The sequence spans 795 residues: Phenylalanine--tRNA ligase beta subunit (795 aa).

Residues 39–148 (AGAFHGVVVG…ADAPLGTDIR (110 aa)) form the tRNA-binding domain. One can recognise a B5 domain in the interval 401–476 (PARATIALRR…RVYGYNNIPN (76 aa)). Mg(2+)-binding residues include Asp-454, Asp-460, Glu-463, and Glu-464. The FDX-ACB domain maps to 701 to 794 (SRFPANRRDI…LKQRFQASLR (94 aa)).

Belongs to the phenylalanyl-tRNA synthetase beta subunit family. Type 1 subfamily. As to quaternary structure, tetramer of two alpha and two beta subunits. Mg(2+) is required as a cofactor.

The protein resides in the cytoplasm. It catalyses the reaction tRNA(Phe) + L-phenylalanine + ATP = L-phenylalanyl-tRNA(Phe) + AMP + diphosphate + H(+). The protein is Phenylalanine--tRNA ligase beta subunit (pheT) of Dickeya dadantii (strain 3937) (Erwinia chrysanthemi (strain 3937)).